The chain runs to 496 residues: Lysine--tRNA ligase (496 aa).

Mg(2+) contacts are provided by Glu409 and Glu416.

Belongs to the class-II aminoacyl-tRNA synthetase family. In terms of assembly, homodimer. Mg(2+) serves as cofactor.

The protein localises to the cytoplasm. It catalyses the reaction tRNA(Lys) + L-lysine + ATP = L-lysyl-tRNA(Lys) + AMP + diphosphate. In Streptococcus pneumoniae (strain CGSP14), this protein is Lysine--tRNA ligase.